A 142-amino-acid polypeptide reads, in one-letter code: Large ribosomal subunit protein uL13 (142 aa).

Belongs to the universal ribosomal protein uL13 family. Part of the 50S ribosomal subunit.

Its function is as follows. This protein is one of the early assembly proteins of the 50S ribosomal subunit, although it is not seen to bind rRNA by itself. It is important during the early stages of 50S assembly. The polypeptide is Large ribosomal subunit protein uL13 (Teredinibacter turnerae (strain ATCC 39867 / T7901)).